A 264-amino-acid chain; its full sequence is Phosphonoacetaldehyde hydrolase (264 aa).

Catalysis depends on Asp9, which acts as the Nucleophile. The Mg(2+) site is built by Asp9 and Ala11. The active-site Schiff-base intermediate with substrate is the Lys50. Asp183 lines the Mg(2+) pocket.

The protein belongs to the HAD-like hydrolase superfamily. PhnX family. As to quaternary structure, homodimer. Mg(2+) serves as cofactor.

It carries out the reaction phosphonoacetaldehyde + H2O = acetaldehyde + phosphate + H(+). Its function is as follows. Involved in phosphonate degradation. The polypeptide is Phosphonoacetaldehyde hydrolase (Bacillus cereus (strain AH187)).